Here is a 42-residue protein sequence, read N- to C-terminus: Photosystem I reaction center subunit IX (42 aa).

A helical transmembrane segment spans residues 7 to 27 (YLSTAPVLATIWFIILAGLLI).

Belongs to the PsaJ family.

The protein localises to the plastid. It localises to the chloroplast thylakoid membrane. May help in the organization of the PsaE and PsaF subunits. The sequence is that of Photosystem I reaction center subunit IX from Mesostigma viride (Green alga).